The following is a 518-amino-acid chain: Arrestin-related trafficking adapter 10 (518 aa).

A Glycyl lysine isopeptide (Lys-Gly) (interchain with G-Cter in ubiquitin) cross-link involves residue Lys-118.

Belongs to the ART10 family. In terms of assembly, interacts with RSP5. In terms of processing, ubiquitinated by RSP5.

Its subcellular location is the cytoplasm. Its function is as follows. May regulate endocytosis by recruiting RSP5 ubiquitin ligase activity to specific plasma membrane proteins in response to extracellular stimuli. The polypeptide is Arrestin-related trafficking adapter 10 (ART10) (Saccharomyces cerevisiae (strain ATCC 204508 / S288c) (Baker's yeast)).